The primary structure comprises 198 residues: Putative coiled-coil domain-containing protein 196 (198 aa).

Residues 24–117 adopt a coiled-coil conformation; that stretch reads NYLKELNEDL…RKEMEMLWNK (94 aa). Basic and acidic residues-rich tracts occupy residues 135–144 and 154–167; these read NKTDLQDGKA and TKNE…EKGK. The interval 135–198 is disordered; that stretch reads NKTDLQDGKA…VSGTSQHHSE (64 aa). The span at 187–198 shows a compositional bias: polar residues; the sequence is GQVSGTSQHHSE.

The chain is Putative coiled-coil domain-containing protein 196 from Bos taurus (Bovine).